A 209-amino-acid chain; its full sequence is Outer-membrane lipoprotein carrier protein (209 aa).

Positions 1–21 are cleaved as a signal peptide; that stretch reads MHRQLRYAVLATALFASTAFA.

It belongs to the LolA family. As to quaternary structure, monomer.

Its subcellular location is the periplasm. Its function is as follows. Participates in the translocation of lipoproteins from the inner membrane to the outer membrane. Only forms a complex with a lipoprotein if the residue after the N-terminal Cys is not an aspartate (The Asp acts as a targeting signal to indicate that the lipoprotein should stay in the inner membrane). This is Outer-membrane lipoprotein carrier protein from Xanthomonas axonopodis pv. citri (strain 306).